A 102-amino-acid chain; its full sequence is Protein AC4 (102 aa).

Belongs to the geminiviridae protein AC4/C4 family.

Pathogenicity determinant. May act as a suppressor of RNA-mediated gene silencing, also known as post-transcriptional gene silencing (PTGS), a mechanism of plant viral defense that limits the accumulation of viral RNAs. The polypeptide is Protein AC4 (Indian cassava mosaic virus (ICMV)).